The following is a 147-amino-acid chain: RecQ-mediated genome instability protein 2 (147 aa).

Residues 1-20 (MAAAADSFSGGPAGVRLPRS) form a disordered region. At A2 the chain carries N-acetylalanine. The residue at position 7 (S7) is a Phosphoserine. A DNA-binding region (OB) is located at residues 44-114 (SRAAAGRGPL…MGVVQACSPE (71 aa)).

This sequence belongs to the RMI2 family. In terms of assembly, component of the RMI complex, containing at least TOP3A, RMI1 and RMI2. The RMI complex interacts with BLM. Post-translationally, phosphorylated during mitosis.

It localises to the nucleus. Essential component of the RMI complex, a complex that plays an important role in the processing of homologous recombination intermediates. It is required to regulate sister chromatid segregation and to limit DNA crossover. Essential for the stability, localization, and function of BLM, TOP3A, and complexes containing BLM. In the RMI complex, it is required to target BLM to chromatin and stress-induced nuclear foci and mitotic phosphorylation of BLM. The protein is RecQ-mediated genome instability protein 2 (RMI2) of Homo sapiens (Human).